A 245-amino-acid polypeptide reads, in one-letter code: Ribonuclease 3 (245 aa).

The RNase III domain occupies 18–146 (LSKFLENLSI…FVGAIYLDSG (129 aa)). E59 is a binding site for Mg(2+). D63 is a catalytic residue. The Mg(2+) site is built by D132 and E135. E135 is a catalytic residue. The DRBM domain occupies 173-242 (DYKSLLQEYV…AEVALKAMEN (70 aa)).

Belongs to the ribonuclease III family. Homodimer. Requires Mg(2+) as cofactor.

It localises to the cytoplasm. It catalyses the reaction Endonucleolytic cleavage to 5'-phosphomonoester.. Its function is as follows. Digests double-stranded RNA. Involved in the processing of primary rRNA transcript to yield the immediate precursors to the large and small rRNAs (23S and 16S). Processes some mRNAs, and tRNAs when they are encoded in the rRNA operon. Processes pre-crRNA and tracrRNA of type II CRISPR loci if present in the organism. The chain is Ribonuclease 3 from Borreliella burgdorferi (strain ATCC 35210 / DSM 4680 / CIP 102532 / B31) (Borrelia burgdorferi).